Consider the following 501-residue polypeptide: Symplectin (501 aa).

The region spanning 20–287 is the CN hydrolase domain; the sequence is PKTDMETREE…SKLLVAEILP (268 aa). Glutamate 60 functions as the Proton acceptor in the catalytic mechanism. The active-site Proton donor is lysine 163. The Nucleophile role is filled by cysteine 196. Residue cysteine 390 is modified to S-(coelenterazin-3a-yl)cysteine.

This sequence belongs to the carbon-nitrogen hydrolase superfamily. BTD/VNN family. As to expression, photogenic gland (at protein level).

Its function is as follows. Monovalent ion-dependent bioluminescence photoprotein. Displays an emission peak at 470 nm (blue light). Trace amounts of monovalent ion trigger the intramolecular oxidation of the chromophore, didehydrocoelenterazine, with the emission of light. The chain is Symplectin from Sthenoteuthis oualaniensis (Purpleback flying squid).